We begin with the raw amino-acid sequence, 230 residues long: Uracil-DNA glycosylase (230 aa).

Asp70 functions as the Proton acceptor in the catalytic mechanism.

This sequence belongs to the uracil-DNA glycosylase (UDG) superfamily. UNG family.

It localises to the cytoplasm. It catalyses the reaction Hydrolyzes single-stranded DNA or mismatched double-stranded DNA and polynucleotides, releasing free uracil.. Excises uracil residues from the DNA which can arise as a result of misincorporation of dUMP residues by DNA polymerase or due to deamination of cytosine. The polypeptide is Uracil-DNA glycosylase (Pseudomonas syringae pv. tomato (strain ATCC BAA-871 / DC3000)).